The sequence spans 202 residues: 3-isopropylmalate dehydratase small subunit (202 aa).

Belongs to the LeuD family. LeuD type 1 subfamily. Heterodimer of LeuC and LeuD.

It carries out the reaction (2R,3S)-3-isopropylmalate = (2S)-2-isopropylmalate. Its pathway is amino-acid biosynthesis; L-leucine biosynthesis; L-leucine from 3-methyl-2-oxobutanoate: step 2/4. Its function is as follows. Catalyzes the isomerization between 2-isopropylmalate and 3-isopropylmalate, via the formation of 2-isopropylmaleate. This Rhizobium johnstonii (strain DSM 114642 / LMG 32736 / 3841) (Rhizobium leguminosarum bv. viciae) protein is 3-isopropylmalate dehydratase small subunit.